Consider the following 215-residue polypeptide: Probable phosphoglycerate mutase GpmB (215 aa).

Substrate is bound by residues 8–15, 21–22, Arg-58, Arg-60, 82–85, 104–105, and 151–152; these read RHGETQWN, QG, ELDM, RR, and GI. Catalysis depends on His-9, which acts as the Tele-phosphohistidine intermediate. Glu-82 serves as the catalytic Proton donor/acceptor.

The protein belongs to the phosphoglycerate mutase family. GpmB subfamily.

The enzyme catalyses (2R)-2-phosphoglycerate = (2R)-3-phosphoglycerate. It participates in carbohydrate degradation; glycolysis; pyruvate from D-glyceraldehyde 3-phosphate: step 3/5. The sequence is that of Probable phosphoglycerate mutase GpmB from Citrobacter koseri (strain ATCC BAA-895 / CDC 4225-83 / SGSC4696).